The sequence spans 295 residues: GTPase Era (295 aa).

The 168-residue stretch at 4–171 (KSGFVTIIGR…IKQIVSFLPE (168 aa)) folds into the Era-type G domain. Positions 12-19 (GRPNVGKS) are G1. 12–19 (GRPNVGKS) contacts GTP. A G2 region spans residues 38-42 (QTTRN). Positions 59–62 (DTPG) are G3. GTP contacts are provided by residues 59 to 63 (DTPGI) and 121 to 124 (NKID). A G4 region spans residues 121-124 (NKID). The G5 stretch occupies residues 150-152 (ISA). In terms of domain architecture, KH type-2 spans 202 to 280 (LDQEIPHGIA…FLELWVKVNE (79 aa)).

The protein belongs to the TRAFAC class TrmE-Era-EngA-EngB-Septin-like GTPase superfamily. Era GTPase family. As to quaternary structure, monomer.

It is found in the cytoplasm. It localises to the cell membrane. An essential GTPase that binds both GDP and GTP, with rapid nucleotide exchange. Plays a role in 16S rRNA processing and 30S ribosomal subunit biogenesis and possibly also in cell cycle regulation and energy metabolism. This is GTPase Era from Alkaliphilus metalliredigens (strain QYMF).